The chain runs to 250 residues: tRNA (guanine-N(1)-)-methyltransferase (250 aa).

Residues glycine 113 and isoleucine 134–leucine 139 contribute to the S-adenosyl-L-methionine site.

This sequence belongs to the RNA methyltransferase TrmD family. Homodimer.

It is found in the cytoplasm. It carries out the reaction guanosine(37) in tRNA + S-adenosyl-L-methionine = N(1)-methylguanosine(37) in tRNA + S-adenosyl-L-homocysteine + H(+). Specifically methylates guanosine-37 in various tRNAs. This is tRNA (guanine-N(1)-)-methyltransferase from Buchnera aphidicola subsp. Baizongia pistaciae (strain Bp).